Here is a 545-residue protein sequence, read N- to C-terminus: Myotubularin-related protein 9 (545 aa).

The residue at position 1 (Met-1) is an N-acetylmethionine. Positions 4–99 constitute a GRAM domain; sequence AELIKTPRVD…LNIASSIEAL (96 aa). A Myotubularin phosphatase domain is found at 123–498; the sequence is GWHSFLPEQE…QSLQLWEGIF (376 aa). A coiled-coil region spans residues 508–542; the sequence is LDEAYEEMVNIIEYNKELQAKVNVLRRQLAELETE.

This sequence belongs to the protein-tyrosine phosphatase family. Non-receptor class myotubularin subfamily. As to quaternary structure, homodimer. Heterodimer (via C-terminus) with lipid phosphatase MTMR6 (via C-terminus). Heterodimer (via coiled coil domain) with lipid phosphatase MTMR7 (via C-terminus).

Its subcellular location is the cytoplasm. It localises to the cell projection. The protein localises to the ruffle membrane. It is found in the perinuclear region. The protein resides in the endoplasmic reticulum. Acts as an adapter for myotubularin-related phosphatases. Increases lipid phosphatase MTMR6 catalytic activity, specifically towards phosphatidylinositol 3,5-bisphosphate, and MTMR6 binding affinity for phosphorylated phosphatidylinositols. Positively regulates lipid phosphatase MTMR7 catalytic activity. The formation of the MTMR6-MTMR9 complex, stabilizes both MTMR6 and MTMR9 protein levels. Plays a role in the late stages of macropinocytosis possibly by regulating MTMR6-mediated dephosphorylation of phosphatidylinositol 3-phosphate in membrane ruffles. Negatively regulates DNA damage-induced apoptosis, in part via its association with MTMR6. Does not bind mono-, di- and tri-phosphorylated phosphatidylinositols, phosphatidic acid and phosphatidylserine. The protein is Myotubularin-related protein 9 (Mtmr9) of Mus musculus (Mouse).